A 716-amino-acid chain; its full sequence is Inhibitor of nuclear factor kappa-B kinase subunit epsilon (716 aa).

One can recognise a Protein kinase domain in the interval 9 to 315 (WHTDDLLGQG…LQRVVVHVFS (307 aa)). Residue 15 to 23 (LGQGATASV) coordinates ATP. Residue K30 forms a Glycyl lysine isopeptide (Lys-Gly) (interchain with G-Cter in ubiquitin) linkage. K38 serves as a coordination point for ATP. Catalysis depends on D135, which acts as the Proton acceptor. S172 is modified (phosphoserine; by autocatalysis and IKKB). Residue K231 forms a Glycyl lysine isopeptide (Lys-Gly) (interchain with G-Cter in SUMO1) linkage. The segment at 383–647 (STAIPKGLAF…VQESLSKLLE (265 aa)) is interaction with DDX3X. K401 is covalently cross-linked (Glycyl lysine isopeptide (Lys-Gly) (interchain with G-Cter in ubiquitin)). The tract at residues 436 to 457 (QELMFRGLHWVMEVLQATCRRT) is leucine-zipper. T501 bears the Phosphothreonine mark. Residue S664 is modified to Phosphoserine.

This sequence belongs to the protein kinase superfamily. Ser/Thr protein kinase family. I-kappa-B kinase subfamily. Homodimer. Interacts with MAVS/IPS1. Interacts (via protein kinase domain) with TTLL12 (via N-terminus); the interaction prevents MAVS binding to IKBKE. Interacts with the adapter proteins AZI2/NAP1, TANK and TBKBP1/SINTBAD. Interacts with SIKE1. Interacts with TICAM1/TRIF, IRF3 and RIGI; interactions are disrupted by the interaction between IKBKE and SIKE1. Interacts with TOPORS; induced by DNA damage. Interacts with CYLD. Interacts (when polyubiquitinated) with IKBKB, IKBKG and MYD88. Interacts with IFIH1. Interacts with DDX3X; the interaction may be induced upon virus infection. Interacts with TRIM6 (via SPRY box). Interacts with unanchored K48-linked polyubiquitin chains; this leads to IKBKE activation. Interacts with TBK1. Interacts with FKBP5. In terms of assembly, (Microbial infection) Interacts (via Protein kinase domain) with arenavirus protein N; the interaction inhibits IKBKE kinase function. As to quaternary structure, (Microbial infection) Interacts with Ebola virus protein VP35; the interaction leads to inhibition of cellular antiviral response by blocking necessary interactions between the IKBKE and MAVS/IPS as well as its substrates IRF3 and IRF7. (Microbial infection) Interacts with Severe fever with thrombocytopenia virus (SFTSV) NSs; this interaction this interaction sequesters IKBKE in NSs-induced cytoplasmic inclusion bodies thereby inhibiting the IFN responses. In terms of assembly, (Microbial infection) Interacts with human T-cell leukemia virus 1/HTLV-1 protein HBZ. As to quaternary structure, (Microbial infection) Interacts with Epstein-Barr virus (EBV) protein NEC2/BFRF1; this interaction inhibits IKBKE kinase activity and IRF3 nuclear translocation. Autophosphorylated and phosphorylated by IKBKB/IKKB. Phosphorylation at Ser-172 is enhanced by the interaction with DDX3X. Phosphorylated at Thr-501 upon IFN activation. In terms of processing, sumoylation by TOPORS upon DNA damage is required for protection of cells against DNA damage-induced cell death. Desumoylated by SENP1. Post-translationally, 'Lys-63'-linked polyubiquitinated at Lys-30 and Lys-401 by TRAF2:BIRC2 and TRAF2:BIRC3 complexes. Ubiquitination is induced by LPS, TNFA and interleukin-1 and required for full kinase activity and KF-kappa-B pathway activation. As to expression, highly expressed in spleen followed by thymus, peripheral blood leukocytes, pancreas, placenta. Weakly expressed in lung, kidney, prostate, ovary and colon.

Its subcellular location is the cytoplasm. It localises to the nucleus. The protein localises to the PML body. It carries out the reaction L-seryl-[I-kappa-B protein] + ATP = O-phospho-L-seryl-[I-kappa-B protein] + ADP + H(+). In terms of biological role, serine/threonine kinase that plays an essential role in regulating inflammatory responses to viral infection, through the activation of the type I IFN, NF-kappa-B and STAT signaling. Also involved in TNFA and inflammatory cytokines, like Interleukin-1, signaling. Following activation of viral RNA sensors, such as RIG-I-like receptors, associates with DDX3X and phosphorylates interferon regulatory factors (IRFs), IRF3 and IRF7, as well as DDX3X. This activity allows subsequent homodimerization and nuclear translocation of the IRF3 leading to transcriptional activation of pro-inflammatory and antiviral genes including IFNB. In order to establish such an antiviral state, IKBKE forms several different complexes whose composition depends on the type of cell and cellular stimuli. Thus, several scaffolding molecules including IPS1/MAVS, TANK, AZI2/NAP1 or TBKBP1/SINTBAD can be recruited to the IKBKE-containing-complexes. Activated by polyubiquitination in response to TNFA and interleukin-1, regulates the NF-kappa-B signaling pathway through, at least, the phosphorylation of CYLD. Phosphorylates inhibitors of NF-kappa-B thus leading to the dissociation of the inhibitor/NF-kappa-B complex and ultimately the degradation of the inhibitor. In addition, is also required for the induction of a subset of ISGs which displays antiviral activity, may be through the phosphorylation of STAT1 at 'Ser-708'. Phosphorylation of STAT1 at 'Ser-708' also seems to promote the assembly and DNA binding of ISGF3 (STAT1:STAT2:IRF9) complexes compared to GAF (STAT1:STAT1) complexes, in this way regulating the balance between type I and type II IFN responses. Protects cells against DNA damage-induced cell death. Also plays an important role in energy balance regulation by sustaining a state of chronic, low-grade inflammation in obesity, wich leads to a negative impact on insulin sensitivity. Phosphorylates AKT1. The polypeptide is Inhibitor of nuclear factor kappa-B kinase subunit epsilon (IKBKE) (Homo sapiens (Human)).